The following is a 480-amino-acid chain: Zinc finger protein ztf-6 (480 aa).

4 disordered regions span residues 92–160 (CHDS…TMMV), 174–198 (GTNG…EEHD), 282–307 (LDAG…PTAS), and 328–351 (DANT…MKVP). Low complexity-rich tracts occupy residues 95 to 105 (SATSTTTTVSH), 131 to 145 (SSIE…SSSV), 174 to 187 (GTNG…TSSS), and 286 to 296 (SSENDGSTSSS). 2 C2H2-type zinc fingers span residues 359–383 (YICP…FVTH) and 388–410 (FNCD…QKIH). The C2H2-type 3; degenerate zinc-finger motif lies at 416–441 (YQCRGCGTNYTTQNGLRLHRQRNPAC). Residues 461-480 (ALSGPLSKNSSPTKQMVSAP) are disordered.

Functionally, probable transcription factor, involved in regulation of dopamine neuron lineage specification. May play a role in maintaining robustness of the Wnt/beta-catenin asymmetry pathway. This is Zinc finger protein ztf-6 from Caenorhabditis elegans.